Here is a 428-residue protein sequence, read N- to C-terminus: Stromal membrane-associated protein 2 (428 aa).

One can recognise an Arf-GAP domain in the interval 13-139; that stretch reads QAVLGSLLSE…INTFRKEKDD (127 aa). A C4-type zinc finger spans residues 28–51; the sequence is CADCQAKGPRWASWNIGVFICIRC. A compositionally biased stretch (basic and acidic residues) spans 161–172; the sequence is VKMPQKKEETQQ. 2 disordered regions span residues 161 to 182 and 222 to 258; these read VKMPQKKEETQQSRKSSPKSTE and SRKVSGSMPTSGSAGSVPENLNLFPEPGGKGEEAGKK.

In terms of assembly, may interact with clathrin heavy chains.

In terms of biological role, GTPase activating protein. May play a role in clathrin-dependent retrograde transport from early endosomes to the trans-Golgi network. The sequence is that of Stromal membrane-associated protein 2 (SMAP2) from Gallus gallus (Chicken).